Reading from the N-terminus, the 204-residue chain is Arginine exporter protein ArgO (204 aa).

Transmembrane regions (helical) follow at residues 1-21 (MWAVYLQGVLLGAAMILPLGP), 37-57 (LMVALLCAVSDMVLISAGIFG), 67-87 (LLLGAVTCGGVAFLLWFGWGA), 111-131 (IIATMLAVTWLNPHVYLDTFV), 154-174 (TASFTWFFALALLAAWLAPWL), and 179-199 (VQRVINFFVGMVMWGIALQLA).

The protein belongs to the LysE/ArgO transporter (TC 2.A.75) family.

The protein resides in the cell inner membrane. It catalyses the reaction L-arginine(in) = L-arginine(out). Functionally, involved in the export of arginine. Important to control the intracellular level of arginine and the correct balance between arginine and lysine. In Pectobacterium atrosepticum (strain SCRI 1043 / ATCC BAA-672) (Erwinia carotovora subsp. atroseptica), this protein is Arginine exporter protein ArgO.